We begin with the raw amino-acid sequence, 256 residues long: Triosephosphate isomerase (256 aa).

Residue 10-12 (NWK) coordinates substrate. The Electrophile role is filled by histidine 97. Glutamate 169 acts as the Proton acceptor in catalysis. Residues glycine 175, serine 214, and 235-236 (GG) contribute to the substrate site.

The protein belongs to the triosephosphate isomerase family. As to quaternary structure, homodimer.

The protein resides in the cytoplasm. It catalyses the reaction D-glyceraldehyde 3-phosphate = dihydroxyacetone phosphate. The protein operates within carbohydrate biosynthesis; gluconeogenesis. It functions in the pathway carbohydrate degradation; glycolysis; D-glyceraldehyde 3-phosphate from glycerone phosphate: step 1/1. Functionally, involved in the gluconeogenesis. Catalyzes stereospecifically the conversion of dihydroxyacetone phosphate (DHAP) to D-glyceraldehyde-3-phosphate (G3P). In Actinobacillus pleuropneumoniae serotype 7 (strain AP76), this protein is Triosephosphate isomerase.